The sequence spans 553 residues: HTH-type transcriptional regulator SgrR (553 aa).

An HTH marR-type domain is found at 1 to 117 (MPSSRLQQQF…LSQIERRFRQ (117 aa)). Residues 26–49 (LQELANVLHCSKRHIRSLLNNMQK) constitute a DNA-binding region (H-T-H motif). The interval 163–494 (EPEADLAHHW…NDLSKEVSQW (332 aa)) is solute-binding.

In terms of biological role, activates the small RNA gene sgrS under glucose-phosphate stress conditions as well as yfdZ. Represses its own transcription under both stress and non-stress conditions. Might act as a sensor of the intracellular accumulation of phosphoglucose by binding these molecules in its C-terminal solute-binding domain. The chain is HTH-type transcriptional regulator SgrR from Photorhabdus laumondii subsp. laumondii (strain DSM 15139 / CIP 105565 / TT01) (Photorhabdus luminescens subsp. laumondii).